A 90-amino-acid chain; its full sequence is Arminin 45266 (90 aa).

Residues 1–20 (MKSASLILFVALVALTYARS) form the signal peptide. Residues 21–59 (YEDVKEEIKNEVEKEILDDLEEENDELDDNTQEVNDPRA) constitute a propeptide that is removed on maturation. A Threonine amide modification is found at threonine 87.

The protein belongs to the arminin family. As to expression, expressed in entodermal epithelium along the body column.

The protein localises to the secreted. The protein resides in the target cell membrane. Antimicrobial peptide with a broad-spectrum antimicrobial activity. Keeps its antibacterial activity under a wide range of salt concentrations that mimic physiological conditions of human blood, which is surprising, since Hydra is an obligate freshwater animal with nearly no salt tolerance. Does not affect red blood cells. This Hydra vulgaris (Hydra) protein is Arminin 45266.